The chain runs to 677 residues: Serine/threonine-protein kinase YPK2/YKR2 (677 aa).

Residues 1–12 (MHSWRISKFKLG) show a composition bias toward basic residues. The disordered stretch occupies residues 1–115 (MHSWRISKFK…ETQGPSSESG (115 aa)). A compositionally biased stretch (basic and acidic residues) spans 41-56 (KHHDGSPKNHNHEHEH). 2 stretches are compositionally biased toward polar residues: residues 61–93 (INTN…NDNS) and 101–115 (SQSS…SESG). Residues Thr63 and Thr66 each carry the phosphothreonine modification. Position 72 is a phosphoserine (Ser72). The Protein kinase domain occupies 344-599 (FDLLKVIGKG…TDEIRNHPFF (256 aa)). Residues 350-358 (IGKGSFGKV) and Lys373 each bind ATP. The Proton acceptor role is filled by Asp467. Thr499 carries the phosphothreonine modification. Phosphothreonine; by PKH2 is present on Thr501. Positions 600 to 670 (KDISWKKLLL…IGDEQLGDSP (71 aa)) constitute an AGC-kinase C-terminal domain. Ser641 bears the Phosphoserine; by TOR2 mark. Position 650 is a phosphoserine (Ser650). Position 659 is a phosphothreonine; by TOR2 (Thr659). Residue Ser669 is modified to Phosphoserine.

Belongs to the protein kinase superfamily. AGC Ser/Thr protein kinase family. RAC subfamily. Post-translationally, autophosphorylated. Phosphorylated by PKH2 and TOR2.

It localises to the cytoplasm. It catalyses the reaction L-seryl-[protein] + ATP = O-phospho-L-seryl-[protein] + ADP + H(+). It carries out the reaction L-threonyl-[protein] + ATP = O-phospho-L-threonyl-[protein] + ADP + H(+). Its activity is regulated as follows. Activated by phytosphingosine (PHS), a sphingoid long chain base. Activated by PKH2 phosphorylation. Kinase activity is regulated by TOR2 via direct phosphorylation of Ser-641 and Thr-659. In terms of biological role, plays an essential role in the proliferation of yeast cells. Involved in a signaling pathway, required for optimal cell wall integrity, that acts in parallel with the PKC1-SLT2-dependent pathway. A substrate of TOR complex 2 (TORC2) and required for TORC2 to regulate spatial aspects of cell growth. Phosphorylation of residue Thr-501 is indispensable for function. May act as a downstream kinase in the sphingolipid-mediated signaling pathway. The protein is Serine/threonine-protein kinase YPK2/YKR2 (YPK2) of Saccharomyces cerevisiae (strain ATCC 204508 / S288c) (Baker's yeast).